We begin with the raw amino-acid sequence, 342 residues long: Anthranilate phosphoribosyltransferase (342 aa).

5-phospho-alpha-D-ribose 1-diphosphate is bound by residues Gly90, 93-94, Thr98, 100-103, 118-126, and Ala130; these read GD, NIST, and KHGNRSVSS. Gly90 is a binding site for anthranilate. Ser102 is a binding site for Mg(2+). Asn121 contributes to the anthranilate binding site. Arg176 lines the anthranilate pocket. Mg(2+)-binding residues include Asp234 and Glu235.

This sequence belongs to the anthranilate phosphoribosyltransferase family. As to quaternary structure, homodimer. The cofactor is Mg(2+).

It catalyses the reaction N-(5-phospho-beta-D-ribosyl)anthranilate + diphosphate = 5-phospho-alpha-D-ribose 1-diphosphate + anthranilate. The protein operates within amino-acid biosynthesis; L-tryptophan biosynthesis; L-tryptophan from chorismate: step 2/5. Catalyzes the transfer of the phosphoribosyl group of 5-phosphorylribose-1-pyrophosphate (PRPP) to anthranilate to yield N-(5'-phosphoribosyl)-anthranilate (PRA). The sequence is that of Anthranilate phosphoribosyltransferase from Mannheimia succiniciproducens (strain KCTC 0769BP / MBEL55E).